The sequence spans 139 residues: Large ribosomal subunit protein uL16 (139 aa).

The protein belongs to the universal ribosomal protein uL16 family. Part of the 50S ribosomal subunit.

Functionally, binds 23S rRNA and is also seen to make contacts with the A and possibly P site tRNAs. This is Large ribosomal subunit protein uL16 from Mycoplasma pneumoniae (strain ATCC 29342 / M129 / Subtype 1) (Mycoplasmoides pneumoniae).